We begin with the raw amino-acid sequence, 374 residues long: Pre-B-cell leukemia transcription factor 4 (374 aa).

The region spanning 14–209 (PRRLDTSDVL…VMTLRSRLLD (196 aa)) is the PBC domain. Positions 21-100 (DVLQQIMAIT…EGVCRPEKRG (80 aa)) are PBC-A. The PBC-B stretch occupies residues 103–209 (GAVARAGTAT…VMTLRSRLLD (107 aa)). The homeobox; TALE-type DNA-binding region spans 210-272 (ARRKRRNFSK…NKRIRYKKNM (63 aa)). The tract at residues 333–374 (QPPPGGGCLQSQAQGSWQGATPQPATASPAGDPGSINSSTSN) is disordered. Over residues 341 to 358 (LQSQAQGSWQGATPQPAT) the composition is skewed to polar residues.

It belongs to the TALE/PBX homeobox family.

It localises to the nucleus. This Homo sapiens (Human) protein is Pre-B-cell leukemia transcription factor 4 (PBX4).